The following is a 737-amino-acid chain: 1,4-alpha-glucan branching enzyme GlgB (737 aa).

Residue Asp-419 is the Nucleophile of the active site. Residue Glu-472 is the Proton donor of the active site.

The protein belongs to the glycosyl hydrolase 13 family. GlgB subfamily. In terms of assembly, monomer.

The catalysed reaction is Transfers a segment of a (1-&gt;4)-alpha-D-glucan chain to a primary hydroxy group in a similar glucan chain.. Its pathway is glycan biosynthesis; glycogen biosynthesis. Its function is as follows. Catalyzes the formation of the alpha-1,6-glucosidic linkages in glycogen by scission of a 1,4-alpha-linked oligosaccharide from growing alpha-1,4-glucan chains and the subsequent attachment of the oligosaccharide to the alpha-1,6 position. In Mesorhizobium japonicum (strain LMG 29417 / CECT 9101 / MAFF 303099) (Mesorhizobium loti (strain MAFF 303099)), this protein is 1,4-alpha-glucan branching enzyme GlgB.